The chain runs to 282 residues: Pantothenate synthetase (282 aa).

Position 26–33 (methionine 26–histidine 33) interacts with ATP. Histidine 33 acts as the Proton donor in catalysis. Residue glutamine 57 participates in (R)-pantoate binding. Glutamine 57 serves as a coordination point for beta-alanine. Glycine 144–aspartate 147 serves as a coordination point for ATP. Glutamine 150 is a (R)-pantoate binding site. Residues valine 173 and leucine 181–arginine 184 each bind ATP.

This sequence belongs to the pantothenate synthetase family. In terms of assembly, homodimer.

Its subcellular location is the cytoplasm. It catalyses the reaction (R)-pantoate + beta-alanine + ATP = (R)-pantothenate + AMP + diphosphate + H(+). It participates in cofactor biosynthesis; (R)-pantothenate biosynthesis; (R)-pantothenate from (R)-pantoate and beta-alanine: step 1/1. In terms of biological role, catalyzes the condensation of pantoate with beta-alanine in an ATP-dependent reaction via a pantoyl-adenylate intermediate. The chain is Pantothenate synthetase from Cupriavidus taiwanensis (strain DSM 17343 / BCRC 17206 / CCUG 44338 / CIP 107171 / LMG 19424 / R1) (Ralstonia taiwanensis (strain LMG 19424)).